The sequence spans 425 residues: Tyrosine--tRNA ligase (425 aa).

Residue tyrosine 33 coordinates L-tyrosine. The 'HIGH' region motif lies at 38-47 (PTADSLHLGN). The L-tyrosine site is built by tyrosine 170 and glutamine 174. The 'KMSKS' region motif lies at 230–234 (KFGKS). Residue lysine 233 coordinates ATP. The S4 RNA-binding domain occupies 356-422 (KKLIDLLVET…GKKNKMIIRL (67 aa)).

Belongs to the class-I aminoacyl-tRNA synthetase family. TyrS type 1 subfamily. In terms of assembly, homodimer.

Its subcellular location is the cytoplasm. It carries out the reaction tRNA(Tyr) + L-tyrosine + ATP = L-tyrosyl-tRNA(Tyr) + AMP + diphosphate + H(+). Catalyzes the attachment of tyrosine to tRNA(Tyr) in a two-step reaction: tyrosine is first activated by ATP to form Tyr-AMP and then transferred to the acceptor end of tRNA(Tyr). The sequence is that of Tyrosine--tRNA ligase from Protochlamydia amoebophila (strain UWE25).